The primary structure comprises 265 residues: Hydroxyethylthiazole kinase (265 aa).

A substrate-binding site is contributed by methionine 43. Residues lysine 118 and threonine 165 each contribute to the ATP site. Glycine 192 contacts substrate.

The protein belongs to the Thz kinase family. It depends on Mg(2+) as a cofactor.

The enzyme catalyses 5-(2-hydroxyethyl)-4-methylthiazole + ATP = 4-methyl-5-(2-phosphooxyethyl)-thiazole + ADP + H(+). Its pathway is cofactor biosynthesis; thiamine diphosphate biosynthesis; 4-methyl-5-(2-phosphoethyl)-thiazole from 5-(2-hydroxyethyl)-4-methylthiazole: step 1/1. In terms of biological role, catalyzes the phosphorylation of the hydroxyl group of 4-methyl-5-beta-hydroxyethylthiazole (THZ). This is Hydroxyethylthiazole kinase from Pyrococcus furiosus (strain ATCC 43587 / DSM 3638 / JCM 8422 / Vc1).